We begin with the raw amino-acid sequence, 202 residues long: Protein GrpE (202 aa).

Residues 21-37 (EELKNEEVKEETHEHEH) show a composition bias toward basic and acidic residues. The interval 21–52 (EELKNEEVKEETHEHEHKHGGHTCCGKHGHKH) is disordered. The span at 38–51 (KHGGHTCCGKHGHK) shows a compositional bias: basic residues.

Belongs to the GrpE family. As to quaternary structure, homodimer.

The protein resides in the cytoplasm. In terms of biological role, participates actively in the response to hyperosmotic and heat shock by preventing the aggregation of stress-denatured proteins, in association with DnaK and GrpE. It is the nucleotide exchange factor for DnaK and may function as a thermosensor. Unfolded proteins bind initially to DnaJ; upon interaction with the DnaJ-bound protein, DnaK hydrolyzes its bound ATP, resulting in the formation of a stable complex. GrpE releases ADP from DnaK; ATP binding to DnaK triggers the release of the substrate protein, thus completing the reaction cycle. Several rounds of ATP-dependent interactions between DnaJ, DnaK and GrpE are required for fully efficient folding. The protein is Protein GrpE of Fusobacterium nucleatum subsp. polymorphum (Fusobacterium polymorphum).